The chain runs to 565 residues: NAD-dependent malic enzyme (565 aa).

Tyrosine 104 serves as the catalytic Proton donor. Position 157 (arginine 157) interacts with NAD(+). Lysine 175 acts as the Proton acceptor in catalysis. 3 residues coordinate a divalent metal cation: glutamate 246, aspartate 247, and aspartate 270. Residues aspartate 270 and asparagine 418 each contribute to the NAD(+) site.

This sequence belongs to the malic enzymes family. As to quaternary structure, homotetramer. Mg(2+) serves as cofactor. Requires Mn(2+) as cofactor.

The enzyme catalyses (S)-malate + NAD(+) = pyruvate + CO2 + NADH. It carries out the reaction oxaloacetate + H(+) = pyruvate + CO2. The polypeptide is NAD-dependent malic enzyme (Sodalis glossinidius (strain morsitans)).